We begin with the raw amino-acid sequence, 297 residues long: Phosphate import ATP-binding protein PstB (297 aa).

The 243-residue stretch at 50–292 (MRLRDVEVFY…PEHDLTEAYI (243 aa)) folds into the ABC transporter domain. Residue 82–89 (GPSGCGKS) coordinates ATP.

Belongs to the ABC transporter superfamily. Phosphate importer (TC 3.A.1.7) family. In terms of assembly, the complex is composed of two ATP-binding proteins (PstB), two transmembrane proteins (PstC and PstA) and a solute-binding protein (PstS).

Its subcellular location is the cell inner membrane. It catalyses the reaction phosphate(out) + ATP + H2O = ADP + 2 phosphate(in) + H(+). In terms of biological role, part of the ABC transporter complex PstSACB involved in phosphate import. Responsible for energy coupling to the transport system. This chain is Phosphate import ATP-binding protein PstB, found in Alcanivorax borkumensis (strain ATCC 700651 / DSM 11573 / NCIMB 13689 / SK2).